The sequence spans 616 residues: Chaperone protein DnaK (616 aa).

Threonine 174 is subject to Phosphothreonine; by autocatalysis. Positions 576 to 616 (QASAPGAGPEGASGGFGGENKKDDNVVDADYTVIDDDKKKT) are disordered. The span at 583–593 (GPEGASGGFGG) shows a compositional bias: gly residues.

The protein belongs to the heat shock protein 70 family.

Acts as a chaperone. This chain is Chaperone protein DnaK, found in Heliobacterium modesticaldum (strain ATCC 51547 / Ice1).